Here is a 452-residue protein sequence, read N- to C-terminus: Lichenan permease IIC component (452 aa).

The PTS EIIC type-3 domain occupies 8-421 (LEEKVMPIAG…AVSFVVYYPF (414 aa)). 10 helical membrane passes run 31 to 51 (GIIL…IGNL), 72 to 92 (LAYP…FGIA), 104 to 124 (LSAG…QVPF), 138 to 158 (GIPL…IAMV), 187 to 207 (FVAL…RLIV), 218 to 238 (IVSV…GGSL), 246 to 266 (LLWA…APIW), 291 to 311 (FFDI…VVTM), 351 to 373 (LLLP…MSTG), and 402 to 422 (SGAV…YPFF).

The protein resides in the cell membrane. Functionally, the phosphoenolpyruvate-dependent sugar phosphotransferase system (PTS), a major carbohydrate active -transport system, catalyzes the phosphorylation of incoming sugar substrates concomitant with their translocation across the cell membrane. This system is involved in lichenan transport. In Bacillus subtilis (strain 168), this protein is Lichenan permease IIC component (licC).